The primary structure comprises 154 residues: Hexachlorocyclohexane dehydrochlorinase 1 (154 aa).

Asp25 is an active-site residue. The active-site Proton acceptor is His73.

Belongs to the HCH dehydrochlorinase family. In terms of assembly, homotrimer.

The protein localises to the periplasm. It carries out the reaction gamma-hexachlorocyclohexane = (3R,4S,5S,6R)-pentachlorocyclohexene + chloride + H(+). It catalyses the reaction (3R,4S,5S,6R)-pentachlorocyclohexene = (3R,6R)-1,3,4,6-tetrachlorocyclohexa-1,4-diene + chloride + H(+). It functions in the pathway xenobiotic degradation; hexachlorocyclohexane degradation. Its function is as follows. Catalyzes the conversion of the important environmental pollutant gamma-hexachlorocyclohexane (gamma-HCH or lindane) to 1,3,4,6-tetrachloro-1,4-cyclohexadiene (1,4-TCDN) via gamma-pentachlorocyclohexene (gamma-PCCH). Proceeds by two successive 1,2-anti conformationally dependent dehydrochlorinations. Also shows activity with alpha- and delta-HCH, giving alpha- and delta-PCCH respectively, but not with the beta isomer. This is Hexachlorocyclohexane dehydrochlorinase 1 from Sphingobium indicum (strain DSM 16412 / CCM 7286 / MTCC 6364 / B90A).